A 305-amino-acid chain; its full sequence is Putative S-adenosyl-L-methionine-dependent methyltransferase MAB_3787 (305 aa).

Residues Asp-132 and Asp-161–Leu-162 contribute to the S-adenosyl-L-methionine site.

The protein belongs to the UPF0677 family.

Exhibits S-adenosyl-L-methionine-dependent methyltransferase activity. The chain is Putative S-adenosyl-L-methionine-dependent methyltransferase MAB_3787 from Mycobacteroides abscessus (strain ATCC 19977 / DSM 44196 / CCUG 20993 / CIP 104536 / JCM 13569 / NCTC 13031 / TMC 1543 / L948) (Mycobacterium abscessus).